The chain runs to 110 residues: Large ribosomal subunit protein uL22 (110 aa).

Belongs to the universal ribosomal protein uL22 family. As to quaternary structure, part of the 50S ribosomal subunit.

In terms of biological role, this protein binds specifically to 23S rRNA; its binding is stimulated by other ribosomal proteins, e.g. L4, L17, and L20. It is important during the early stages of 50S assembly. It makes multiple contacts with different domains of the 23S rRNA in the assembled 50S subunit and ribosome. The globular domain of the protein is located near the polypeptide exit tunnel on the outside of the subunit, while an extended beta-hairpin is found that lines the wall of the exit tunnel in the center of the 70S ribosome. This Nitrosococcus oceani (strain ATCC 19707 / BCRC 17464 / JCM 30415 / NCIMB 11848 / C-107) protein is Large ribosomal subunit protein uL22.